Reading from the N-terminus, the 47-residue chain is Photosystem II reaction center protein K (47 aa).

Positions 1-10 (MAPLTLDLLA) are excised as a propeptide. A helical membrane pass occupies residues 26–46 (LPLIPLLFFLLVFVWQAAVGF).

Belongs to the PsbK family. As to quaternary structure, PSII is composed of 1 copy each of membrane proteins PsbA, PsbB, PsbC, PsbD, PsbE, PsbF, PsbH, PsbI, PsbJ, PsbK, PsbL, PsbM, PsbT, PsbX, PsbY, Psb30/Ycf12, peripheral proteins PsbO, CyanoQ (PsbQ), PsbU, PsbV and a large number of cofactors. It forms dimeric complexes.

It is found in the cellular thylakoid membrane. Its function is as follows. One of the components of the core complex of photosystem II (PSII). PSII is a light-driven water:plastoquinone oxidoreductase that uses light energy to abstract electrons from H(2)O, generating O(2) and a proton gradient subsequently used for ATP formation. It consists of a core antenna complex that captures photons, and an electron transfer chain that converts photonic excitation into a charge separation. In Prochlorococcus marinus (strain SARG / CCMP1375 / SS120), this protein is Photosystem II reaction center protein K.